We begin with the raw amino-acid sequence, 541 residues long: MTTAHSAPRDNSDKPVIWTVSVTRLFELFRDISLEFDHLATITPIQLGFEKAVTYIRKKLATERCDAIIAAGSNGAYLKSRLSIPVILIKPSGFDVLQALAKAGKLTSSIGIVTYQETIPALLAFQKTFHLRLEQRSYVTEEDARGQINELKANGIEAVVGAGLITDLAEEAGMTAIFIYSAATVRQAFHDALDMTRLTRRQRVDYPSGKGLQTRYELGDIRGQSPQMEQLRQTITLYARSRAAVLIQGETGTGKELAAQAIHQTFFHRQPHRQNKPSPPFVAVNCGAITESLLEAELFGYEEGAFTGSRRGGRAGLFEIAHGGTLFLDEIGEMPLPLQTRLLRVLEEKAVTRVGGHQPIPVDVRVISATHCDLDREIMQGRFRPDLFYRLSILRLTLPPLRERQADILPLAESFLKQSLAAMEIPFTESIRHGLTQCQPLLLAWRWPGNIRELRNMMERLALFLSVDPAPTLDRQFMRQLLPELMVNTAELTPSTVDANALQDVLARFKGDKTAAARYLGISRTTLWRRLKAGAKDQSDN.

In terms of domain architecture, Sigma-54 factor interaction spans 221–464; it reads IRGQSPQMEQ…RNMMERLALF (244 aa). Position 321 to 330 (321 to 330) interacts with ATP; sequence AHGGTLFLDE. Positions 513–532 form a DNA-binding region, H-T-H motif; that stretch reads KTAAARYLGISRTTLWRRLK.

Involved in the transcriptional regulation of the propionate catabolism operon. This chain is Propionate catabolism operon regulatory protein (prpR), found in Salmonella typhimurium (strain LT2 / SGSC1412 / ATCC 700720).